Here is a 483-residue protein sequence, read N- to C-terminus: Cysteine--tRNA ligase (483 aa).

Position 29 (Cys29) interacts with Zn(2+). The 'HIGH' region signature appears at Ile31 to His41. Residues Cys215, His240, and Glu244 each coordinate Zn(2+). The short motif at Lys272–Ser276 is the 'KMSKS' region element. Lys275 is an ATP binding site.

It belongs to the class-I aminoacyl-tRNA synthetase family. As to quaternary structure, monomer. Requires Zn(2+) as cofactor.

It is found in the cytoplasm. It catalyses the reaction tRNA(Cys) + L-cysteine + ATP = L-cysteinyl-tRNA(Cys) + AMP + diphosphate. The protein is Cysteine--tRNA ligase (cysS) of Synechocystis sp. (strain ATCC 27184 / PCC 6803 / Kazusa).